The chain runs to 364 residues: Aminomethyltransferase (364 aa).

It belongs to the GcvT family. In terms of assembly, the glycine cleavage system is composed of four proteins: P, T, L and H.

It catalyses the reaction N(6)-[(R)-S(8)-aminomethyldihydrolipoyl]-L-lysyl-[protein] + (6S)-5,6,7,8-tetrahydrofolate = N(6)-[(R)-dihydrolipoyl]-L-lysyl-[protein] + (6R)-5,10-methylene-5,6,7,8-tetrahydrofolate + NH4(+). Its function is as follows. The glycine cleavage system catalyzes the degradation of glycine. The protein is Aminomethyltransferase of Escherichia coli O127:H6 (strain E2348/69 / EPEC).